A 274-amino-acid polypeptide reads, in one-letter code: Large ribosomal subunit protein uL2cz/uL2cy (274 aa).

The segment at 225-274 (PVDHPHGGGEGRAPIGRKKPVTPWGYPALGRRTRKRKKYSETLILRRRSK) is disordered.

This sequence belongs to the universal ribosomal protein uL2 family. In terms of assembly, part of the 50S ribosomal subunit.

Its subcellular location is the plastid. The protein localises to the chloroplast. The chain is Large ribosomal subunit protein uL2cz/uL2cy (rpl2-A) from Crucihimalaya wallichii (Rock-cress).